A 370-amino-acid polypeptide reads, in one-letter code: DNA primase large subunit PriL (370 aa).

The [4Fe-4S] cluster site is built by C230, C301, C310, and C317. Residues 337 to 370 (EGEEAQGKEQGKEKDDGKEKENGKESEVKKKKEK) are disordered.

It belongs to the eukaryotic-type primase large subunit family. As to quaternary structure, heterodimer of a small subunit (PriS) and a large subunit (PriL). [4Fe-4S] cluster serves as cofactor.

Regulatory subunit of DNA primase, an RNA polymerase that catalyzes the synthesis of short RNA molecules used as primers for DNA polymerase during DNA replication. Stabilizes and modulates the activity of the small subunit, increasing the rate of DNA synthesis, and conferring RNA synthesis capability. The DNA polymerase activity may enable DNA primase to also catalyze primer extension after primer synthesis. May also play a role in DNA repair. This Methanosarcina mazei (strain ATCC BAA-159 / DSM 3647 / Goe1 / Go1 / JCM 11833 / OCM 88) (Methanosarcina frisia) protein is DNA primase large subunit PriL.